Consider the following 941-residue polypeptide: Replicative DNA helicase DnaB (941 aa).

Positions 1-25 (MAEFEERPRLSIGEEEAPPYPLEKL) are disordered. Positions 214–484 (RPGGITGVPS…PVYRLTTRLG (271 aa)) constitute an SF4 helicase; first part domain. Residue 245 to 252 (ARPSMGKT) coordinates ATP. In terms of domain architecture, DOD-type homing endonuclease spans 534–683 (LLGHLIGDGC…VQSLLLRLGI (150 aa)). Residues 646–915 (DGCIQMRRGK…ARFENLTMYQ (270 aa)) enclose the SF4 helicase; second part domain. Positions 914 to 941 (YQPEPGTPLPETPDETILPSGPPDEAPF) are disordered.

It belongs to the helicase family. DnaB subfamily. Homohexamer. Upon expression in E.coli this protein undergoes self splicing that involves a post-translational excision of the intervening region (intein) followed by peptide ligation.

The enzyme catalyses Couples ATP hydrolysis with the unwinding of duplex DNA at the replication fork by translocating in the 5'-3' direction. This creates two antiparallel DNA single strands (ssDNA). The leading ssDNA polymer is the template for DNA polymerase III holoenzyme which synthesizes a continuous strand.. It catalyses the reaction ATP + H2O = ADP + phosphate + H(+). The main replicative DNA helicase, it participates in initiation and elongation during chromosome replication. Travels ahead of the DNA replisome, separating dsDNA into templates for DNA synthesis. A processive ATP-dependent 5'-3' DNA helicase it has DNA-dependent ATPase activity. In terms of biological role, the intein is an endonuclease. The polypeptide is Replicative DNA helicase DnaB (Rhodothermus marinus (Rhodothermus obamensis)).